Reading from the N-terminus, the 117-residue chain is Prefoldin subunit beta (117 aa).

The protein belongs to the prefoldin subunit beta family. In terms of assembly, heterohexamer of two alpha and four beta subunits.

It localises to the cytoplasm. Its function is as follows. Molecular chaperone capable of stabilizing a range of proteins. Seems to fulfill an ATP-independent, HSP70-like function in archaeal de novo protein folding. This chain is Prefoldin subunit beta, found in Thermococcus kodakarensis (strain ATCC BAA-918 / JCM 12380 / KOD1) (Pyrococcus kodakaraensis (strain KOD1)).